Reading from the N-terminus, the 289-residue chain is RNA exonuclease 4 (289 aa).

Residues 1–24 show a composition bias toward polar residues; sequence MALSSNWQALLASESNPTSNGKNK. The disordered stretch occupies residues 1–34; it reads MALSSNWQALLASESNPTSNGKNKQSNRKIRNVK. Residues 25-34 are compositionally biased toward basic residues; sequence QSNRKIRNVK. The Exonuclease domain occupies 121 to 273; it reads YIAMDCEFVG…EDARATMLLY (153 aa).

It belongs to the REXO4 family.

It localises to the nucleus. In terms of biological role, exoribonuclease involved in ribosome biosynthesis. Involved in the processing of ITS1, the internal transcribed spacer localized between the 18S and 5.8S rRNAs. The protein is RNA exonuclease 4 (REX4) of Saccharomyces cerevisiae (strain ATCC 204508 / S288c) (Baker's yeast).